The primary structure comprises 244 residues: 5-oxoprolinase subunit A (244 aa).

Belongs to the LamB/PxpA family. In terms of assembly, forms a complex composed of PxpA, PxpB and PxpC.

It catalyses the reaction 5-oxo-L-proline + ATP + 2 H2O = L-glutamate + ADP + phosphate + H(+). In terms of biological role, catalyzes the cleavage of 5-oxoproline to form L-glutamate coupled to the hydrolysis of ATP to ADP and inorganic phosphate. In Escherichia coli (strain K12), this protein is 5-oxoprolinase subunit A.